Consider the following 152-residue polypeptide: Sulfur-rich protein (152 aa).

The tract at residues 1-20 is disordered; the sequence is MSTVPVVQGAGSSNSAQDIS. 2 helical membrane-spanning segments follow: residues 43 to 63 and 69 to 89; these read VGLV…LVSA and AIYL…VGIL.

It localises to the membrane. The polypeptide is Sulfur-rich protein (srp) (Chlamydia trachomatis serovar A (strain ATCC VR-571B / DSM 19440 / HAR-13)).